Reading from the N-terminus, the 881-residue chain is Formin-like protein 10 (881 aa).

The N-terminal stretch at 1–24 (MAMKRVVFLLLLVAASALVKSSRG) is a signal peptide. The disordered stretch occupies residues 194 to 223 (LTPSNSLNMEPPSPYYPSKSAHKHQGVAPP). The chain crosses the membrane as a helical span at residues 236–256 (VVLIAVLPTAALSFLAAFLCF). A compositionally biased stretch (polar residues) spans 333 to 346 (TLVTGGTQENNATS). 3 disordered regions span residues 333 to 427 (TLVT…EVNA), 683 to 703 (ENGR…ESLQ), and 837 to 881 (ASQK…DSND). A compositionally biased stretch (pro residues) spans 351-390 (LMPPPPPPPPPPPPPPPPPPPRPPPPPPPIKKGAPPPAPP). Residues 400 to 424 (LSPTESSRSEESSASELASESSETE) show a composition bias toward low complexity. An FH2 domain is found at 422-854 (ETEVNAPRAK…KSQANGNSNN (433 aa)). Polar residues predominate over residues 692 to 701 (STSDDNSNES). Over residues 846 to 865 (SQANGNSNNPSSQSNPQEQQ) the composition is skewed to low complexity. A compositionally biased stretch (basic and acidic residues) spans 870–881 (LDHHFDSSDSND).

This sequence belongs to the formin-like family. Class-I subfamily.

It localises to the membrane. In Oryza sativa subsp. japonica (Rice), this protein is Formin-like protein 10 (FH10).